We begin with the raw amino-acid sequence, 451 residues long: Runt-related transcription factor 1 (451 aa).

The tract at residues 1–37 (MRIPVDASTSRRFTPPSTALSPGKMSEALPLGAPDGG) is disordered. The segment covering 7–20 (ASTSRRFTPPSTAL) has biased composition (polar residues). Phosphothreonine is present on Thr14. At Ser21 the chain carries Phosphoserine. N6-acetyllysine is present on residues Lys24 and Lys43. The 129-residue stretch at 50–178 (SMVEVLADHP…TVDGPREPRR (129 aa)) folds into the Runt domain. Residues 80-84 (RCNKT) are interaction with DNA. Asn112, Glu116, Arg139, and Val170 together coordinate chloride. Interaction with DNA stretches follow at residues 135–143 (RFVGRSGRG) and 168–177 (ITVDGPREPR). Disordered regions lie at residues 170–195 (VDGP…LSFS) and 209–252 (MRVS…SPPW). Phosphoserine occurs at positions 193 and 212. The span at 222–247 (PRASLNHSTAFNPQPQSQMQDARQIQ) shows a compositional bias: polar residues. Ser249 bears the Phosphoserine; by HIPK2 mark. Residues Ser266 and Ser268 each carry the phosphoserine modification. Residues 268–290 (SVHPATPISPGRASGMTSLSAEL) are disordered. Phosphothreonine; by HIPK2 is present on Thr273. A Phosphoserine; by HIPK2 modification is found at Ser276. Positions 291-370 (SSRLSTAPDL…SQAQAGPFQT (80 aa)) are interaction with KAT6A. Thr296 bears the Phosphothreonine mark. The segment at 307–399 (RQFPTLPSIS…MVGGERSPPR (93 aa)) is interaction with KAT6B. An interaction with FOXP3 region spans residues 361–401 (SQAQAGPFQTGSPSYHLYYGASAGSYQFSMVGGERSPPRIL). The segment at 406–451 (NASTGAALLNPSLPSQSDVVETEGSHSNSPTNMPPARLEEAVWRPY) is disordered. The span at 417–436 (SLPSQSDVVETEGSHSNSPT) shows a compositional bias: polar residues. Ser434 carries the post-translational modification Phosphoserine. The span at 442-451 (RLEEAVWRPY) shows a compositional bias: basic and acidic residues.

As to quaternary structure, heterodimer with CBFB. RUNX1 binds DNA as a monomer and through the Runt domain. DNA-binding is increased by heterodimerization. Interacts with TLE1 and ALYREF/THOC4. Interacts with HIPK2, ELF1, ELF2 and SPI1. Interacts via its Runt domain with the ELF4 N-terminal region. Interaction with ELF2 isoform 2 (NERF-1a) may act to repress RUNX1-mediated transactivation. Interacts with KAT6A and KAT6B. Interacts with SUV39H1, leading to abrogation of transactivating and DNA-binding properties of RUNX1. Interacts with YAP1. Interaction with CDK6 prevents myeloid differentiation, reducing its transcription transactivation activity. Found in a complex with PRMT5, RUNX1 and CBFB. Interacts with FOXP3. Interacts with TBX21. Interacts with DPF2. Phosphorylated in its C-terminus upon IL-6 treatment. Phosphorylation enhances interaction with KAT6A. In terms of processing, methylated. Post-translationally, phosphorylated in Ser-249 Thr-273 and Ser-276 by HIPK2 when associated with CBFB and DNA. This phosphorylation promotes subsequent EP300 phosphorylation. Isoform 4 is expressed at high levels in thymus, spleen and T-cell lines and at lower levels in myeloid cell lines and nonhematopoietic cells. Isoform 5 is expressed ubiquitously in lumbar vertebrae, brain, kidney, heart, muscle, ovary and osteoblast-like cell line MC3T3-E1.

It is found in the nucleus. Forms the heterodimeric complex core-binding factor (CBF) with CBFB. RUNX members modulate the transcription of their target genes through recognizing the core consensus binding sequence 5'-TGTGGT-3', or very rarely, 5'-TGCGGT-3', within their regulatory regions via their runt domain, while CBFB is a non-DNA-binding regulatory subunit that allosterically enhances the sequence-specific DNA-binding capacity of RUNX. The heterodimers bind to the core site of a number of enhancers and promoters, including murine leukemia virus, polyomavirus enhancer, T-cell receptor enhancers, LCK, IL3 and GM-CSF promoters. Essential for the development of normal hematopoiesis. Acts synergistically with ELF4 to transactivate the IL-3 promoter and with ELF2 to transactivate the BLK promoter. Inhibits KAT6B-dependent transcriptional activation. Involved in lineage commitment of immature T cell precursors. CBF complexes repress ZBTB7B transcription factor during cytotoxic (CD8+) T cell development. They bind to RUNX-binding sequence within the ZBTB7B locus acting as transcriptional silencer and allowing for cytotoxic T cell differentiation. CBF complexes binding to the transcriptional silencer is essential for recruitment of nuclear protein complexes that catalyze epigenetic modifications to establish epigenetic ZBTB7B silencing. Controls the anergy and suppressive function of regulatory T-cells (Treg) by associating with FOXP3. Activates the expression of IL2 and IFNG and down-regulates the expression of TNFRSF18, IL2RA and CTLA4, in conventional T-cells. Positively regulates the expression of RORC in T-helper 17 cells. In terms of biological role, isoform 4 shows higher binding activities for target genes and binds TCR-beta-E2 and RAG-1 target site with threefold higher affinity than other isoforms. It is less effective in the context of neutrophil terminal differentiation. The polypeptide is Runt-related transcription factor 1 (Runx1) (Mus musculus (Mouse)).